The following is a 448-amino-acid chain: Mitochondrial distribution and morphology protein 10 (448 aa).

Belongs to the MDM10 family. As to quaternary structure, component of the ER-mitochondria encounter structure (ERMES) or MDM complex, composed of MMM1, MDM10, MDM12 and MDM34. Associates with the mitochondrial outer membrane sorting assembly machinery SAM(core) complex.

Its subcellular location is the mitochondrion outer membrane. Its function is as follows. Component of the ERMES/MDM complex, which serves as a molecular tether to connect the endoplasmic reticulum and mitochondria. Components of this complex are involved in the control of mitochondrial shape and protein biogenesis and may function in phospholipid exchange. MDM10 is involved in the late assembly steps of the general translocase of the mitochondrial outer membrane (TOM complex). Functions in the TOM40-specific route of the assembly of outer membrane beta-barrel proteins, including the association of TOM40 with the receptor TOM22 and small TOM proteins. Can associate with the SAM(core) complex as well as the MDM12-MMM1 complex, both involved in late steps of the major beta-barrel assembly pathway, that is responsible for biogenesis of all outer membrane beta-barrel proteins. May act as a switch that shuttles between both complexes and channels precursor proteins into the TOM40-specific pathway. Plays a role in mitochondrial morphology and in the inheritance of mitochondria. In Zygosaccharomyces rouxii (strain ATCC 2623 / CBS 732 / NBRC 1130 / NCYC 568 / NRRL Y-229), this protein is Mitochondrial distribution and morphology protein 10.